Here is a 605-residue protein sequence, read N- to C-terminus: Sulfite reductase [NADPH] flavoprotein alpha-component (605 aa).

The region spanning 68–206 (VTVLYGSQTG…PAAEWLEGVL (139 aa)) is the Flavodoxin-like domain. Residues 74 to 78 (SQTGN), 121 to 126 (STHGEG), and 154 to 185 (VLAL…KRIS) each bind FMN. The interval 213–234 (GGGSAAPAPAAASQTGESSYSR) is disordered. Positions 235-454 (TNPFRAEVLE…VQHNQNFKLP (220 aa)) constitute an FAD-binding FR-type domain. Residue 392–395 (RLYS) coordinates FAD. NADP(+)-binding positions include Asp-495 and 525–533 (SRDTEEKVY).

In terms of assembly, alpha(8)-beta(8). The alpha component is a flavoprotein, the beta component is a hemoprotein. Requires FAD as cofactor. FMN serves as cofactor.

The catalysed reaction is hydrogen sulfide + 3 NADP(+) + 3 H2O = sulfite + 3 NADPH + 4 H(+). It functions in the pathway sulfur metabolism; hydrogen sulfide biosynthesis; hydrogen sulfide from sulfite (NADPH route): step 1/1. Component of the sulfite reductase complex that catalyzes the 6-electron reduction of sulfite to sulfide. This is one of several activities required for the biosynthesis of L-cysteine from sulfate. The flavoprotein component catalyzes the electron flow from NADPH -&gt; FAD -&gt; FMN to the hemoprotein component. In Bacillus subtilis (strain 168), this protein is Sulfite reductase [NADPH] flavoprotein alpha-component (cysJ).